Reading from the N-terminus, the 1295-residue chain is Phosphoribosylformylglycinamidine synthase (1295 aa).

Positions 305–327 (WPGAATGSGGEIRDEGATGRGAK) are disordered. Residues 307–318 (GAATGSGGEIRD) and Ala678 contribute to the ATP site. Mg(2+) is bound by residues Glu718, Asn722, and Asp884. ATP is bound at residue Ser886. In terms of domain architecture, Glutamine amidotransferase type-1 spans 1042 to 1295 (VAVLREQGVN…IFRNARKQLG (254 aa)). Catalysis depends on Cys1135, which acts as the Nucleophile. Catalysis depends on residues His1260 and Glu1262.

This sequence in the N-terminal section; belongs to the FGAMS family. As to quaternary structure, monomer.

It localises to the cytoplasm. The catalysed reaction is N(2)-formyl-N(1)-(5-phospho-beta-D-ribosyl)glycinamide + L-glutamine + ATP + H2O = 2-formamido-N(1)-(5-O-phospho-beta-D-ribosyl)acetamidine + L-glutamate + ADP + phosphate + H(+). Its pathway is purine metabolism; IMP biosynthesis via de novo pathway; 5-amino-1-(5-phospho-D-ribosyl)imidazole from N(2)-formyl-N(1)-(5-phospho-D-ribosyl)glycinamide: step 1/2. In terms of biological role, phosphoribosylformylglycinamidine synthase involved in the purines biosynthetic pathway. Catalyzes the ATP-dependent conversion of formylglycinamide ribonucleotide (FGAR) and glutamine to yield formylglycinamidine ribonucleotide (FGAM) and glutamate. The chain is Phosphoribosylformylglycinamidine synthase from Escherichia coli (strain UTI89 / UPEC).